Here is a 542-residue protein sequence, read N- to C-terminus: CTP synthase (542 aa).

Residues 1–265 (MTRYVFITGG…DREVLGHFGL (265 aa)) form an amidoligase domain region. Serine 13 is a CTP binding site. Serine 13 is a UTP binding site. Residues 14-19 (SLGKGL) and aspartate 71 contribute to the ATP site. Mg(2+) contacts are provided by aspartate 71 and glutamate 139. Residues 146–148 (DIE), 186–191 (KTKPTQ), and lysine 222 each bind CTP. Residues 186-191 (KTKPTQ) and lysine 222 each bind UTP. One can recognise a Glutamine amidotransferase type-1 domain in the interval 291 to 541 (SIAIVGKYTG…VGAAIEQSRL (251 aa)). Glycine 353 contacts L-glutamine. Cysteine 380 functions as the Nucleophile; for glutamine hydrolysis in the catalytic mechanism. L-glutamine is bound by residues 381-384 (FGMQ), glutamate 404, and arginine 469. Catalysis depends on residues histidine 514 and glutamate 516.

It belongs to the CTP synthase family. Homotetramer.

It catalyses the reaction UTP + L-glutamine + ATP + H2O = CTP + L-glutamate + ADP + phosphate + 2 H(+). The enzyme catalyses L-glutamine + H2O = L-glutamate + NH4(+). The catalysed reaction is UTP + NH4(+) + ATP = CTP + ADP + phosphate + 2 H(+). The protein operates within pyrimidine metabolism; CTP biosynthesis via de novo pathway; CTP from UDP: step 2/2. With respect to regulation, allosterically activated by GTP, when glutamine is the substrate; GTP has no effect on the reaction when ammonia is the substrate. The allosteric effector GTP functions by stabilizing the protein conformation that binds the tetrahedral intermediate(s) formed during glutamine hydrolysis. Inhibited by the product CTP, via allosteric rather than competitive inhibition. Catalyzes the ATP-dependent amination of UTP to CTP with either L-glutamine or ammonia as the source of nitrogen. Regulates intracellular CTP levels through interactions with the four ribonucleotide triphosphates. The chain is CTP synthase from Methylobacterium radiotolerans (strain ATCC 27329 / DSM 1819 / JCM 2831 / NBRC 15690 / NCIMB 10815 / 0-1).